An 824-amino-acid polypeptide reads, in one-letter code: Disintegrin and metalloproteinase domain-containing protein 17 (824 aa).

Positions 1 to 17 (MRQSLLFLTSVVPFVLA) are cleaved as a signal peptide. The propeptide occupies 18–214 (PRPPDDPGFG…PEELVHRVKR (197 aa)). Residues N103, N157, and N174 are each glycosylated (N-linked (GlcNAc...) asparagine). Residues 182 to 189 (KVCGYLKV) carry the Cysteine switch motif. C184 serves as a coordination point for Zn(2+). The Extracellular segment spans residues 215–671 (RADPDPMKNT…NTFGKFLADN (457 aa)). A Peptidase M12B domain is found at 223-474 (NTCKLLVVAD…KAQECFQERS (252 aa)). Disulfide bonds link C225–C333, C365–C469, and C423–C453. N-linked (GlcNAc...) asparagine glycosylation occurs at N264. H405 serves as a coordination point for Zn(2+). Residue E406 is part of the active site. Residues H409 and H415 each coordinate Zn(2+). N-linked (GlcNAc...) asparagine glycans are attached at residues N452, N498, N539, and N551. Positions 475-563 (NKVCGNSRVD…ECPPPGNAED (89 aa)) constitute a Disintegrin domain. Intrachain disulfides connect C534-C555, C573-C582, C578-C591, and C593-C600. N594 is a glycosylation site (N-linked (GlcNAc...) asparagine). Residues 603–671 (CCRDLSGRCV…NTFGKFLADN (69 aa)) form a crambin-like region. The chain crosses the membrane as a helical span at residues 672 to 692 (IVGSVLVFSLIFWIPFSILVH). Over 693–824 (CVDKKLDKQY…NRVDSKETEC (132 aa)) the chain is Cytoplasmic. 2 short sequence motifs (SH3-binding) span residues 731-738 (PAPQTPGR) and 741-748 (PAPVIPSA). Residues 732–824 (APQTPGRLQP…NRVDSKETEC (93 aa)) are disordered. Phosphothreonine; by MAPK14 is present on T735. The segment covering 741-752 (PAPVIPSAPAAP) has biased composition (low complexity). T761 carries the post-translational modification Phosphothreonine. Phosphoserine is present on S767. Basic and acidic residues-rich tracts occupy residues 768–781 (TDSH…EKDP), 791–807 (SFED…EKAA), and 815–824 (NRVDSKETEC). 2 positions are modified to phosphoserine: S791 and S819.

Interacts with MAD2L1, MAPK14 and MUC1. Interacts with iRhom1/RHBDF1 and iRhom2/RHBDF2. Interacts with FRMD8 via its interaction with iRhom1/RHBDF1 and iRhom2/RHBDF2. Interacts with TSPAN8. The cofactor is Zn(2+). The precursor is cleaved by a furin endopeptidase. Post-translationally, phosphorylated. Stimulation by growth factor or phorbol 12-myristate 13-acetate induces phosphorylation of Ser-819 but decreases phosphorylation of Ser-791. Phosphorylation at Thr-735 by MAPK14 is required for ADAM17-mediated ectodomain shedding. Ubiquitously expressed. Expressed at highest levels in adult heart, placenta, skeletal muscle, pancreas, spleen, thymus, prostate, testes, ovary and small intestine, and in fetal brain, lung, liver and kidney. Expressed in natural killer cells (at protein level).

Its subcellular location is the cell membrane. It carries out the reaction Narrow endopeptidase specificity. Cleaves Pro-Leu-Ala-Gln-Ala-|-Val-Arg-Ser-Ser-Ser in the membrane-bound, 26-kDa form of tumor necrosis factor alpha (TNFalpha). Similarly cleaves other membrane-anchored, cell-surface proteins to 'shed' the extracellular domains.. Functionally, transmembrane metalloprotease which mediates the ectodomain shedding of a myriad of transmembrane proteins including adhesion proteins, growth factor precursors and cytokines important for inflammation and immunity. Cleaves the membrane-bound precursor of TNF-alpha to its mature soluble form. Responsible for the proteolytical release of soluble JAM3 from endothelial cells surface. Responsible for the proteolytic release of several other cell-surface proteins, including p75 TNF-receptor, interleukin 1 receptor type II, p55 TNF-receptor, transforming growth factor-alpha, L-selectin, growth hormone receptor, MUC1 and the amyloid precursor protein. Acts as an activator of Notch pathway by mediating cleavage of Notch, generating the membrane-associated intermediate fragment called Notch extracellular truncation (NEXT). Plays a role in the proteolytic processing of ACE2. Plays a role in hemostasis through shedding of GP1BA, the platelet glycoprotein Ib alpha chain. Mediates the proteolytic cleavage of LAG3, leading to release the secreted form of LAG3. Mediates the proteolytic cleavage of IL6R, leading to the release of secreted form of IL6R. Mediates the proteolytic cleavage and shedding of FCGR3A upon NK cell stimulation, a mechanism that allows for increased NK cell motility and detachment from opsonized target cells. Cleaves TREM2, resulting in shedding of the TREM2 ectodomain. This is Disintegrin and metalloproteinase domain-containing protein 17 from Homo sapiens (Human).